A 263-amino-acid polypeptide reads, in one-letter code: uncharacterized protein (263 aa).

Residues 53 to 89 (SAVTASKFSPDGRWLVNLTDQGYVQLWDVHKGERVKT) form a WD repeat.

This is an uncharacterized protein from Deinococcus radiodurans (strain ATCC 13939 / DSM 20539 / JCM 16871 / CCUG 27074 / LMG 4051 / NBRC 15346 / NCIMB 9279 / VKM B-1422 / R1).